The primary structure comprises 545 residues: CTP synthase (545 aa).

An amidoligase domain region spans residues 1–266; the sequence is MTTNYIFVTG…DDYICKRFSL (266 aa). Serine 14 serves as a coordination point for CTP. Serine 14 provides a ligand contact to UTP. Residues 15–20 and aspartate 72 each bind ATP; that span reads SLGKGI. Aspartate 72 and glutamate 140 together coordinate Mg(2+). Residues 147-149, 187-192, and lysine 223 each bind CTP; these read DIE and KTKPTQ. UTP is bound by residues 187–192 and lysine 223; that span reads KTKPTQ. 239–241 is an ATP binding site; that stretch reads KDI. Residues 291–542 form the Glutamine amidotransferase type-1 domain; it reads TIGMVGKYVA…VKAAGAYQKR (252 aa). Glycine 352 provides a ligand contact to L-glutamine. Cysteine 379 functions as the Nucleophile; for glutamine hydrolysis in the catalytic mechanism. L-glutamine is bound by residues 380–383, glutamate 403, and arginine 470; that span reads LGMQ. Active-site residues include histidine 515 and glutamate 517.

This sequence belongs to the CTP synthase family. In terms of assembly, homotetramer.

The catalysed reaction is UTP + L-glutamine + ATP + H2O = CTP + L-glutamate + ADP + phosphate + 2 H(+). It catalyses the reaction L-glutamine + H2O = L-glutamate + NH4(+). The enzyme catalyses UTP + NH4(+) + ATP = CTP + ADP + phosphate + 2 H(+). It participates in pyrimidine metabolism; CTP biosynthesis via de novo pathway; CTP from UDP: step 2/2. Allosterically activated by GTP, when glutamine is the substrate; GTP has no effect on the reaction when ammonia is the substrate. The allosteric effector GTP functions by stabilizing the protein conformation that binds the tetrahedral intermediate(s) formed during glutamine hydrolysis. Inhibited by the product CTP, via allosteric rather than competitive inhibition. Functionally, catalyzes the ATP-dependent amination of UTP to CTP with either L-glutamine or ammonia as the source of nitrogen. Regulates intracellular CTP levels through interactions with the four ribonucleotide triphosphates. This is CTP synthase from Pectobacterium atrosepticum (strain SCRI 1043 / ATCC BAA-672) (Erwinia carotovora subsp. atroseptica).